The chain runs to 405 residues: Arginine biosynthesis bifunctional protein ArgJ, mitochondrial (405 aa).

Substrate contacts are provided by T174, K200, T211, and E300. Residue T211 is the Nucleophile of the active site.

The protein belongs to the ArgJ family. As to quaternary structure, heterodimer of an alpha and a beta chain. The alpha and beta chains are autoproteolytically processed from a single precursor protein within the mitochondrion.

The protein localises to the mitochondrion matrix. It carries out the reaction N(2)-acetyl-L-ornithine + L-glutamate = N-acetyl-L-glutamate + L-ornithine. The enzyme catalyses L-glutamate + acetyl-CoA = N-acetyl-L-glutamate + CoA + H(+). Its pathway is amino-acid biosynthesis; L-arginine biosynthesis; L-ornithine and N-acetyl-L-glutamate from L-glutamate and N(2)-acetyl-L-ornithine (cyclic): step 1/1. It functions in the pathway amino-acid biosynthesis; L-arginine biosynthesis; N(2)-acetyl-L-ornithine from L-glutamate: step 1/4. Its function is as follows. Catalyzes two activities which are involved in the cyclic version of arginine biosynthesis: the synthesis of acetylglutamate from glutamate and acetyl-CoA, and of ornithine by transacetylation between acetylornithine and glutamate. The polypeptide is Arginine biosynthesis bifunctional protein ArgJ, mitochondrial (Candida tropicalis (strain ATCC MYA-3404 / T1) (Yeast)).